The following is a 248-amino-acid chain: Tabinhibitin 10 (248 aa).

The first 22 residues, 1-22, serve as a signal peptide directing secretion; that stretch reads MTLKRIFCAALALIVLQSVASA. The SCP domain occupies 66-208; sequence LQKTNWLRGV…NYKGAFHCSL (143 aa). A Cell attachment site motif is present at residues 221–223; that stretch reads RGD.

The protein belongs to the CRISP family. As to expression, expressed in salivary glands.

The protein resides in the secreted. Functionally, inhibits platelet aggregation induced by all agonists tested (ADP, arachidonic acid, the thromboxane A2 analog U46619, thrombin, and snake venom snaclecs (TMVA that activates platelet through GPIB, and stejnulxin that specifically acts through GPVI (GP6))). May act by competing with fibrinogen for binding to glycoprotein IIb/IIIa (ITGA2B/ITGB3). The sequence is that of Tabinhibitin 10 from Tabanus yao (Horsefly).